The following is a 502-amino-acid chain: Glycerol kinase (502 aa).

Threonine 14 contacts ADP. Positions 14, 15, and 16 each coordinate ATP. A sn-glycerol 3-phosphate-binding site is contributed by threonine 14. Residue arginine 18 coordinates ADP. The sn-glycerol 3-phosphate site is built by arginine 84, glutamate 85, tyrosine 136, and aspartate 246. The glycerol site is built by arginine 84, glutamate 85, tyrosine 136, aspartate 246, and glutamine 247. ADP is bound by residues threonine 268 and glycine 311. ATP-binding residues include threonine 268, glycine 311, glutamine 315, and glycine 412. Residues glycine 412 and asparagine 416 each contribute to the ADP site.

Belongs to the FGGY kinase family. In terms of assembly, homotetramer and homodimer (in equilibrium). Heterodimer with EIIA-Glc. Binds 1 zinc ion per glycerol kinase EIIA-Glc dimer. The zinc ion is important for dimerization.

The catalysed reaction is glycerol + ATP = sn-glycerol 3-phosphate + ADP + H(+). Its pathway is polyol metabolism; glycerol degradation via glycerol kinase pathway; sn-glycerol 3-phosphate from glycerol: step 1/1. With respect to regulation, activity of this regulatory enzyme is affected by several metabolites. Allosterically and non-competitively inhibited by fructose 1,6-bisphosphate (FBP) and unphosphorylated phosphocarrier protein EIIA-Glc (III-Glc), an integral component of the bacterial phosphotransferase (PTS) system. In terms of biological role, key enzyme in the regulation of glycerol uptake and metabolism. Catalyzes the phosphorylation of glycerol to yield sn-glycerol 3-phosphate. The chain is Glycerol kinase from Salmonella typhimurium (strain LT2 / SGSC1412 / ATCC 700720).